Reading from the N-terminus, the 87-residue chain is Small ribosomal subunit protein bS20 (87 aa).

A disordered region spans residues 1–22; sequence MAHHKSAIKRIKQNAKKNARNR.

This sequence belongs to the bacterial ribosomal protein bS20 family.

Functionally, binds directly to 16S ribosomal RNA. This Pelobacter propionicus (strain DSM 2379 / NBRC 103807 / OttBd1) protein is Small ribosomal subunit protein bS20.